A 638-amino-acid chain; its full sequence is Intron-encoded RNA maturase bI4 (638 aa).

Residues 1–253 form a COB exons 1 to 4 encoded region; it reads MAFRKSNVYL…VFYSPNTLGQ (253 aa). A COB intron 4 encoded region spans residues 253 to 638; that stretch reads QNMALLLITY…LKFNEKWNNN (386 aa).

In the C-terminal section; belongs to the LAGLIDADG endonuclease family. As to quaternary structure, forms a ternary complex with intron derived RNA and the imported mitochondrial leucyl-tRNA synthetase NAM2. The proteins do not interact directly with each other. The mature protein may arise from proteolytic cleavage of an in-frame translation of COB exons 1 to 4 plus intron 4, containing the bI4 open reading frame. Cleavage would take place close to the Met-385 resulting in an active maturase of about 30 kDa.

The protein resides in the mitochondrion. In terms of biological role, mitochondrial mRNA maturase required for splicing of intron 4 of the cytochrome b (COB) gene, containing its own coding sequence, and intron 4 in COX1, coding for the related homing endonuclease aI4. In vivo splicing requires in addition the imported mitochondrial leucyl-tRNA synthetase NAM2. Both proteins seem to stimulate the intrinsic ribozyme activity of intron bI4 through binding to and stabilizing specific secondary and tertiary structure elements in the RNA. The sequence is that of Intron-encoded RNA maturase bI4 (BI4) from Saccharomyces cerevisiae (strain ATCC 204508 / S288c) (Baker's yeast).